The primary structure comprises 365 residues: Aminomethyltransferase (365 aa).

Belongs to the GcvT family. The glycine cleavage system is composed of four proteins: P, T, L and H.

The catalysed reaction is N(6)-[(R)-S(8)-aminomethyldihydrolipoyl]-L-lysyl-[protein] + (6S)-5,6,7,8-tetrahydrofolate = N(6)-[(R)-dihydrolipoyl]-L-lysyl-[protein] + (6R)-5,10-methylene-5,6,7,8-tetrahydrofolate + NH4(+). Functionally, the glycine cleavage system catalyzes the degradation of glycine. The protein is Aminomethyltransferase of Natranaerobius thermophilus (strain ATCC BAA-1301 / DSM 18059 / JW/NM-WN-LF).